The sequence spans 420 residues: Probable pectate lyase C (420 aa).

The first 20 residues, 1–20 (MKLSEPLLVSLAAFSQAVTA), serve as a signal peptide directing secretion. N-linked (GlcNAc...) asparagine glycans are attached at residues Asn49, Asn165, and Asn202. The active site involves Arg205. The EF-hand domain maps to 262–297 (NANFHGYVQNNYYDPDKDGQLDGFELGVSSSNYGGM). Ca(2+) contacts are provided by Asp275, Asp277, Asp279, Gln281, and Glu286. Positions 358 to 396 (TMGGPGTLNGGTPAKDTDGDGIPDEAEKQLGTDPNTNDS) are disordered. Asn394 carries an N-linked (GlcNAc...) asparagine glycan.

This sequence belongs to the polysaccharide lyase 1 family. It depends on Ca(2+) as a cofactor.

It localises to the secreted. It catalyses the reaction Eliminative cleavage of (1-&gt;4)-alpha-D-galacturonan to give oligosaccharides with 4-deoxy-alpha-D-galact-4-enuronosyl groups at their non-reducing ends.. Pectinolytic enzyme consist of four classes of enzymes: pectin lyase, polygalacturonase, pectin methylesterase and rhamnogalacturonase. Among pectinolytic enzymes, pectin lyase is the most important in depolymerization of pectin, since it cleaves internal glycosidic bonds of highly methylated pectins. Favors pectate, the anion, over pectin, the methyl ester. The chain is Probable pectate lyase C (plyC) from Aspergillus fumigatus (strain ATCC MYA-4609 / CBS 101355 / FGSC A1100 / Af293) (Neosartorya fumigata).